The following is a 446-amino-acid chain: Bifunctional protein GlmU (446 aa).

Residues 1–226 (MLAIAILAAG…PFEIKGINDR (226 aa)) are pyrophosphorylase. UDP-N-acetyl-alpha-D-glucosamine-binding positions include 7–10 (LAAG), lysine 21, glutamine 73, and 78–79 (GT). Aspartate 103 is a Mg(2+) binding site. 4 residues coordinate UDP-N-acetyl-alpha-D-glucosamine: glycine 140, glutamate 155, asparagine 170, and asparagine 224. Asparagine 224 serves as a coordination point for Mg(2+). The tract at residues 227-247 (VQLSECEHYIQEELKSLWMSK) is linker. An N-acetyltransferase region spans residues 248–446 (GVSFVDPISC…SKAIIRTKAD (199 aa)). Residues arginine 329 and lysine 347 each coordinate UDP-N-acetyl-alpha-D-glucosamine. Histidine 359 acts as the Proton acceptor in catalysis. Residues tyrosine 362 and asparagine 373 each contribute to the UDP-N-acetyl-alpha-D-glucosamine site. Acetyl-CoA-binding residues include alanine 376, alanine 419, and arginine 436.

The protein in the N-terminal section; belongs to the N-acetylglucosamine-1-phosphate uridyltransferase family. This sequence in the C-terminal section; belongs to the transferase hexapeptide repeat family. As to quaternary structure, homotrimer. The cofactor is Mg(2+).

The protein localises to the cytoplasm. The catalysed reaction is alpha-D-glucosamine 1-phosphate + acetyl-CoA = N-acetyl-alpha-D-glucosamine 1-phosphate + CoA + H(+). It carries out the reaction N-acetyl-alpha-D-glucosamine 1-phosphate + UTP + H(+) = UDP-N-acetyl-alpha-D-glucosamine + diphosphate. It functions in the pathway nucleotide-sugar biosynthesis; UDP-N-acetyl-alpha-D-glucosamine biosynthesis; N-acetyl-alpha-D-glucosamine 1-phosphate from alpha-D-glucosamine 6-phosphate (route II): step 2/2. The protein operates within nucleotide-sugar biosynthesis; UDP-N-acetyl-alpha-D-glucosamine biosynthesis; UDP-N-acetyl-alpha-D-glucosamine from N-acetyl-alpha-D-glucosamine 1-phosphate: step 1/1. It participates in bacterial outer membrane biogenesis; LPS lipid A biosynthesis. Catalyzes the last two sequential reactions in the de novo biosynthetic pathway for UDP-N-acetylglucosamine (UDP-GlcNAc). The C-terminal domain catalyzes the transfer of acetyl group from acetyl coenzyme A to glucosamine-1-phosphate (GlcN-1-P) to produce N-acetylglucosamine-1-phosphate (GlcNAc-1-P), which is converted into UDP-GlcNAc by the transfer of uridine 5-monophosphate (from uridine 5-triphosphate), a reaction catalyzed by the N-terminal domain. The chain is Bifunctional protein GlmU from Prochlorococcus marinus (strain NATL2A).